We begin with the raw amino-acid sequence, 1449 residues long: VWFA and cache domain-containing protein CG16868 (1449 aa).

The N-terminal stretch at 1 to 23 (MWPNSNLNAVLLILAVLACPTSS) is a signal peptide. The Extracellular segment spans residues 24–1220 (QHVPLAMANS…NPQREQHAYS (1197 aa)). Asn-32, Asn-112, Asn-153, Asn-407, Asn-447, and Asn-497 each carry an N-linked (GlcNAc...) asparagine glycan. The VWFA domain maps to 320–541 (FVLFLIDVGS…TSLPQTSSRI (222 aa)). The Cache 1 domain occupies 557–639 (VHPPVVDADS…PRPLIQRETS (83 aa)). Asn-649, Asn-668, and Asn-707 each carry an N-linked (GlcNAc...) asparagine glycan. A Cache 2 domain is found at 889-934 (TAPYLDAGGAGYIITIAHTIFEGKAHALHSAQQDRPVAVVALDVPY). N-linked (GlcNAc...) asparagine glycosylation is found at Asn-1015, Asn-1025, Asn-1059, and Asn-1111. A helical membrane pass occupies residues 1221–1241 (AFGPLGGAIVVLVMVIGFAIY). Topologically, residues 1242-1449 (CYRHNLDAQT…VHRHMETAES (208 aa)) are cytoplasmic. Disordered stretches follow at residues 1307-1339 (YHVS…SSDQ) and 1352-1416 (DKRH…GGSV). A compositionally biased stretch (low complexity) spans 1359-1369 (DTMSISTSISS). Residues 1370-1392 (PTNRQQSSSQPNTHPYLSNQPTS) show a composition bias toward polar residues.

It belongs to the calcium channel subunit alpha-2/delta family.

It is found in the membrane. In Drosophila melanogaster (Fruit fly), this protein is VWFA and cache domain-containing protein CG16868.